The following is a 518-amino-acid chain: Tropomyosin-1, isoforms 33/34 (518 aa).

Residues 14–267 (DKDGALERAL…DDLIVEKERY (254 aa)) are a coiled coil. Disordered stretches follow at residues 101–125 (RSEERLGSATAKLSEASQAADESER) and 288–518 (FWNP…APPA). Over residues 293 to 305 (NPKPPTPKLPTPT) the composition is skewed to pro residues. The segment covering 318 to 348 (AAEAAAAAEAEAAEAAAAAGEAGPDGAPAAP) has biased composition (low complexity). Pro residues-rich tracts occupy residues 357–374 (EPTPPKEPTPPPPPPPPF) and 394–405 (EPPPPGSEPEPV). The span at 406–518 (PAAEGEAAPA…AAAEGEAPPA (113 aa)) shows a compositional bias: low complexity.

Belongs to the tropomyosin family. As to quaternary structure, homodimer. In terms of tissue distribution, both isoforms are only expressed in indirect flight muscles.

It is found in the cytoplasm. It localises to the cytoskeleton. In terms of biological role, tropomyosin, in association with the troponin complex, plays a central role in the calcium dependent regulation of muscle contraction. This is Tropomyosin-1, isoforms 33/34 (Tm1) from Drosophila melanogaster (Fruit fly).